The following is a 156-amino-acid chain: Ribosomal RNA large subunit methyltransferase H (156 aa).

S-adenosyl-L-methionine is bound by residues L73, G104, and 123 to 128 (LSSLTL).

It belongs to the RNA methyltransferase RlmH family. Homodimer.

The protein resides in the cytoplasm. It catalyses the reaction pseudouridine(1915) in 23S rRNA + S-adenosyl-L-methionine = N(3)-methylpseudouridine(1915) in 23S rRNA + S-adenosyl-L-homocysteine + H(+). Specifically methylates the pseudouridine at position 1915 (m3Psi1915) in 23S rRNA. This chain is Ribosomal RNA large subunit methyltransferase H, found in Neisseria meningitidis serogroup C / serotype 2a (strain ATCC 700532 / DSM 15464 / FAM18).